The following is a 117-amino-acid chain: Inner kinetochore subunit MHF1 (117 aa).

The protein belongs to the TAF9 family. CENP-S/MHF1 subfamily. In terms of assembly, the MHF histone-fold complex is a heterotetramer of 2 MHF1-MHF2 heterodimers. Together with MPH1/FANCM, forms the FANCM-MHF complex. Component of the inner kinetochore constitutive centromere-associated network (CCAN).

In terms of biological role, dsDNA-binding component of a FANCM-MHF complex involved in DNA damage repair and genome maintenance. FANCM-MHF promotes gene conversion at blocked replication forks, probably by reversal of the stalled fork. Component of the kinetochore, a multiprotein complex that assembles on centromeric DNA and attaches chromosomes to spindle microtubules, mediating chromosome segregation and sister chromatid segregation during meiosis and mitosis. Component of the inner kinetochore constitutive centromere-associated network (CCAN), which serves as a structural platform for outer kinetochore assembly. This Candida albicans (strain SC5314 / ATCC MYA-2876) (Yeast) protein is Inner kinetochore subunit MHF1.